Consider the following 87-residue polypeptide: Small ribosomal subunit protein uS15 (87 aa).

It belongs to the universal ribosomal protein uS15 family. Part of the 30S ribosomal subunit. Forms a bridge to the 50S subunit in the 70S ribosome, contacting the 23S rRNA.

In terms of biological role, one of the primary rRNA binding proteins, it binds directly to 16S rRNA where it helps nucleate assembly of the platform of the 30S subunit by binding and bridging several RNA helices of the 16S rRNA. Functionally, forms an intersubunit bridge (bridge B4) with the 23S rRNA of the 50S subunit in the ribosome. The chain is Small ribosomal subunit protein uS15 from Clostridium perfringens (strain ATCC 13124 / DSM 756 / JCM 1290 / NCIMB 6125 / NCTC 8237 / Type A).